Reading from the N-terminus, the 303-residue chain is Quinolinate synthase (303 aa).

The iminosuccinate site is built by His-23 and Ser-40. Position 85 (Cys-85) interacts with [4Fe-4S] cluster. Residues 111–113 (YIN) and Ser-128 contribute to the iminosuccinate site. Cys-171 is a [4Fe-4S] cluster binding site. Residues 197-199 (HPE) and Thr-214 each bind iminosuccinate. [4Fe-4S] cluster is bound at residue Cys-259.

It belongs to the quinolinate synthase family. Type 2 subfamily. Requires [4Fe-4S] cluster as cofactor.

Its subcellular location is the cytoplasm. It carries out the reaction iminosuccinate + dihydroxyacetone phosphate = quinolinate + phosphate + 2 H2O + H(+). It participates in cofactor biosynthesis; NAD(+) biosynthesis; quinolinate from iminoaspartate: step 1/1. Its function is as follows. Catalyzes the condensation of iminoaspartate with dihydroxyacetone phosphate to form quinolinate. This chain is Quinolinate synthase, found in Clostridium acetobutylicum (strain ATCC 824 / DSM 792 / JCM 1419 / IAM 19013 / LMG 5710 / NBRC 13948 / NRRL B-527 / VKM B-1787 / 2291 / W).